Here is a 234-residue protein sequence, read N- to C-terminus: Large ribosomal subunit protein uL1 (234 aa).

Belongs to the universal ribosomal protein uL1 family. Part of the 50S ribosomal subunit.

In terms of biological role, binds directly to 23S rRNA. The L1 stalk is quite mobile in the ribosome, and is involved in E site tRNA release. Protein L1 is also a translational repressor protein, it controls the translation of the L11 operon by binding to its mRNA. The polypeptide is Large ribosomal subunit protein uL1 (Escherichia coli O127:H6 (strain E2348/69 / EPEC)).